We begin with the raw amino-acid sequence, 89 residues long: Small ribosomal subunit protein uS15 (89 aa).

This sequence belongs to the universal ribosomal protein uS15 family. Part of the 30S ribosomal subunit. Forms a bridge to the 50S subunit in the 70S ribosome, contacting the 23S rRNA.

Its function is as follows. One of the primary rRNA binding proteins, it binds directly to 16S rRNA where it helps nucleate assembly of the platform of the 30S subunit by binding and bridging several RNA helices of the 16S rRNA. In terms of biological role, forms an intersubunit bridge (bridge B4) with the 23S rRNA of the 50S subunit in the ribosome. The protein is Small ribosomal subunit protein uS15 of Methylorubrum extorquens (strain CM4 / NCIMB 13688) (Methylobacterium extorquens).